The chain runs to 330 residues: Tryptophan--tRNA ligase (330 aa).

ATP-binding positions include Gln10–Thr12 and Gly18–Asn19. The 'HIGH' region signature appears at Ala11–Asn19. An L-tryptophan-binding site is contributed by Asp134. ATP contacts are provided by residues Gly146–Asp148, Ile186, and Lys195–Ser199. The 'KMSKS' region motif lies at Lys195 to Ser199.

The protein belongs to the class-I aminoacyl-tRNA synthetase family. In terms of assembly, homodimer.

It is found in the cytoplasm. It carries out the reaction tRNA(Trp) + L-tryptophan + ATP = L-tryptophyl-tRNA(Trp) + AMP + diphosphate + H(+). Catalyzes the attachment of tryptophan to tRNA(Trp). This is Tryptophan--tRNA ligase from Rickettsia conorii (strain ATCC VR-613 / Malish 7).